The sequence spans 67 residues: Small ribosomal subunit protein eS27 (67 aa).

Residues C22, C25, C41, and C44 each contribute to the Zn(2+) site. Residues 22 to 44 (CPDCGNEQVTFSHAAMVVRCLVC) form a C4-type zinc finger.

It belongs to the eukaryotic ribosomal protein eS27 family. In terms of assembly, part of the 30S ribosomal subunit. It depends on Zn(2+) as a cofactor.

The polypeptide is Small ribosomal subunit protein eS27 (Pyrobaculum calidifontis (strain DSM 21063 / JCM 11548 / VA1)).